Here is a 324-residue protein sequence, read N- to C-terminus: Glutathione synthetase (324 aa).

The region spanning 124 to 309 (KLAIAQFREF…VAGMFIDALE (186 aa)) is the ATP-grasp domain. An ATP-binding site is contributed by 150–206 (HAEQGDVIFKPLDGMGGAGIFRVGADGMNLGSVIETLTHNGTRTVMAQQYIPAIRDG). Residues Glu280 and Asn282 each coordinate Mg(2+).

It belongs to the prokaryotic GSH synthase family. Requires Mg(2+) as cofactor. Mn(2+) serves as cofactor.

It catalyses the reaction gamma-L-glutamyl-L-cysteine + glycine + ATP = glutathione + ADP + phosphate + H(+). Its pathway is sulfur metabolism; glutathione biosynthesis; glutathione from L-cysteine and L-glutamate: step 2/2. The chain is Glutathione synthetase from Ralstonia nicotianae (strain ATCC BAA-1114 / GMI1000) (Ralstonia solanacearum).